A 703-amino-acid polypeptide reads, in one-letter code: Calcium-responsive transcription factor (703 aa).

3 disordered regions span residues 1–61 (MEQS…QNIP), 130–150 (GPLVDENSPQDVSEEKPSDRN), and 517–539 (GNSQGESVSSKLETNQTRNSLSP). The segment covering 9 to 22 (KVNHNDSEESKTDS) has biased composition (basic and acidic residues). A compositionally biased stretch (polar residues) spans 23 to 34 (QHLTYMDSSEPS).

It is found in the nucleus. Its function is as follows. Acts as a transcriptional activator that mediates the calcium- and neuron-selective induction of BDNF exon III transcription. Binds to the consensus calcium-response element CaRE1 5'-CTATTTCGAG-3' sequence. This Bos taurus (Bovine) protein is Calcium-responsive transcription factor (CARF).